The sequence spans 127 residues: MSTIPENLKYADSHEWVLDNGDGTVTVGITDHAQDLLGDVVYVELPEVGTEVTATEQFSLVESVKAASDIYAPVNGEVIEVNDALNDAPELINEAPFEGAWIAKIKLSNAADLDKLLDAAGYSATIA.

The Lipoyl-binding domain occupies 24–106 (TVTVGITDHA…FEGAWIAKIK (83 aa)). Position 65 is an N6-lipoyllysine (Lys65).

Belongs to the GcvH family. The glycine cleavage system is composed of four proteins: P, T, L and H. (R)-lipoate serves as cofactor.

The glycine cleavage system catalyzes the degradation of glycine. The H protein shuttles the methylamine group of glycine from the P protein to the T protein. This Marinomonas sp. (strain MWYL1) protein is Glycine cleavage system H protein.